The sequence spans 198 residues: FMN-dependent NADH:quinone oxidoreductase 2 (198 aa).

FMN is bound at residue 136–139 (SRGG).

It belongs to the azoreductase type 1 family. In terms of assembly, homodimer. FMN serves as cofactor.

It carries out the reaction 2 a quinone + NADH + H(+) = 2 a 1,4-benzosemiquinone + NAD(+). It catalyses the reaction N,N-dimethyl-1,4-phenylenediamine + anthranilate + 2 NAD(+) = 2-(4-dimethylaminophenyl)diazenylbenzoate + 2 NADH + 2 H(+). Functionally, quinone reductase that provides resistance to thiol-specific stress caused by electrophilic quinones. Its function is as follows. Also exhibits azoreductase activity. Catalyzes the reductive cleavage of the azo bond in aromatic azo compounds to the corresponding amines. This Clostridium perfringens (strain 13 / Type A) protein is FMN-dependent NADH:quinone oxidoreductase 2.